Consider the following 252-residue polypeptide: Type IV pilus assembly protein PilF (252 aa).

The first 17 residues, 1–17, serve as a signal peptide directing secretion; the sequence is MTVRAALVFLLAVGLTG. Cys-18 is lipidated: N-palmitoyl cysteine. Cys-18 is lipidated: S-diacylglycerol cysteine. TPR repeat units follow at residues 32 to 67, 84 to 101, 104 to 133, 139 to 171, 174 to 203, and 208 to 235; these read GRDE…LEID, EMEP…LASD, NARV…EASQ, ERSR…LRLN, QPSV…LFAQ, and NARS…GLQL.

As to quaternary structure, interacts with PilQ; this interaction is essential for assemby of PilQ into secretins.

The protein resides in the cell outer membrane. Essential component of the type IV pilus (T4P) that plays a role in surface and host cell adhesion, colonization, biofilm maturation, virulence, and twitching, a form of surface-associated motility facilitated by cycles of extension, adhesion, and retraction of T4P fibers. Plays an essential role in the outer membrane localization and assembly of PilQ into secretins which are dodecamers of PilQ. The chain is Type IV pilus assembly protein PilF (pilF) from Pseudomonas aeruginosa (strain ATCC 15692 / DSM 22644 / CIP 104116 / JCM 14847 / LMG 12228 / 1C / PRS 101 / PAO1).